The sequence spans 297 residues: Myozenin-1 (297 aa).

The segment at 1 to 34 (MPLSGTPAPNKKRKSSKLIMELTGGGQESSGLNL) is disordered. Serine 82 is subject to Phosphoserine. The interval 105–172 (FSYSKSSGGG…ALPDNQAGGE (68 aa)) is disordered. Low complexity predominate over residues 118–128 (RSGSAGQYGSD). Residues 136-162 (SGSGSGSGSGPGSGGAGGPGGHSGRGG) are compositionally biased toward gly residues.

Belongs to the myozenin family. As to quaternary structure, interacts with ACTN2, ACTN3, FLNA, FLNB, FLNC, LDB3, PPP3CA and TCAP. Interacts via its C-terminal region with MYOT.

It localises to the nucleus. Its subcellular location is the cell projection. It is found in the pseudopodium. Myozenins may serve as intracellular binding proteins involved in linking Z-disk proteins such as alpha-actinin, gamma-filamin, TCAP/telethonin, LDB3/ZASP and localizing calcineurin signaling to the sarcomere. Plays an important role in the modulation of calcineurin signaling. May play a role in myofibrillogenesis. The sequence is that of Myozenin-1 (MYOZ1) from Bos taurus (Bovine).